Consider the following 216-residue polypeptide: Pyrophosphatase PpaX (216 aa).

The active-site Nucleophile is Asp-9.

The protein belongs to the HAD-like hydrolase superfamily. PpaX family. Requires Mg(2+) as cofactor.

The enzyme catalyses diphosphate + H2O = 2 phosphate + H(+). Functionally, hydrolyzes pyrophosphate formed during P-Ser-HPr dephosphorylation by HPrK/P. Might play a role in controlling the intracellular pyrophosphate pool. The chain is Pyrophosphatase PpaX from Bacillus cereus (strain AH820).